Here is a 97-residue protein sequence, read N- to C-terminus: Co-chaperonin GroES (97 aa).

This sequence belongs to the GroES chaperonin family. Heptamer of 7 subunits arranged in a ring. Interacts with the chaperonin GroEL.

It localises to the cytoplasm. Together with the chaperonin GroEL, plays an essential role in assisting protein folding. The GroEL-GroES system forms a nano-cage that allows encapsulation of the non-native substrate proteins and provides a physical environment optimized to promote and accelerate protein folding. GroES binds to the apical surface of the GroEL ring, thereby capping the opening of the GroEL channel. The sequence is that of Co-chaperonin GroES from Bifidobacterium longum (strain NCC 2705).